A 349-amino-acid chain; its full sequence is Draxin (349 aa).

Residues 1 to 25 (MAASSTFFSPSLFLCVLVLIDITLA) form the signal peptide. Positions 40 to 53 (NHLQNQETWPQQPR) are enriched in polar residues. Disordered regions lie at residues 40–63 (NHLQNQETWPQQPRSGHHHKHGLA), 119–166 (PHAE…LYKK), and 246–273 (WPSAKKKEKRRSKSSNGGNETSSAEGEP). The span at 54–63 (SGHHHKHGLA) shows a compositional bias: basic residues. The span at 119-139 (PHAERENQSPGSERGKKQNRE) shows a compositional bias: basic and acidic residues. Basic residues-rich tracts occupy residues 140-155 (QRRHSRRDRLKHHRGK) and 249-258 (AKKKEKRRSK). Asparagine 264 carries N-linked (GlcNAc...) asparagine glycosylation.

Belongs to the draxin family.

It is found in the secreted. Its function is as follows. Chemorepulsive axon guidance protein required for the development of spinal cord and forebrain commissures. Acts as a chemorepulsive guidance protein for commissural axons during development. Able to inhibit or repel neurite outgrowth from dorsal spinal cord and cortical explants in vitro. Binds directly to the neurites and growth cones. The polypeptide is Draxin (Gallus gallus (Chicken)).